The primary structure comprises 358 residues: D-alanine--D-alanine ligase B (358 aa).

The 206-residue stretch at Lys147–Glu352 folds into the ATP-grasp domain. Val179 to Glu234 is a binding site for ATP. Residues Asp305, Glu319, and Asn321 each contribute to the Mg(2+) site.

This sequence belongs to the D-alanine--D-alanine ligase family. Requires Mg(2+) as cofactor. Mn(2+) serves as cofactor.

The protein localises to the cytoplasm. It carries out the reaction 2 D-alanine + ATP = D-alanyl-D-alanine + ADP + phosphate + H(+). It participates in cell wall biogenesis; peptidoglycan biosynthesis. In terms of biological role, cell wall formation. This chain is D-alanine--D-alanine ligase B, found in Clostridium tetani (strain Massachusetts / E88).